The following is a 217-amino-acid chain: Small ribosomal subunit protein uS3 (217 aa).

The KH type-2 domain maps to 38–106; it reads IRQLIQTKLA…QVHINIVEIK (69 aa).

It belongs to the universal ribosomal protein uS3 family. Part of the 30S ribosomal subunit. Forms a tight complex with proteins S10 and S14.

Its function is as follows. Binds the lower part of the 30S subunit head. Binds mRNA in the 70S ribosome, positioning it for translation. The chain is Small ribosomal subunit protein uS3 from Lactococcus lactis subsp. lactis (strain IL1403) (Streptococcus lactis).